We begin with the raw amino-acid sequence, 953 residues long: Serine/threonine-protein kinase ppk30 (953 aa).

Residues 57–326 enclose the Protein kinase domain; it reads VIIQRYLSEG…IYQTLKEIME (270 aa). ATP-binding positions include 63–71 and K85; that span reads LSEGGFSHV. Catalysis depends on D187, which acts as the Proton acceptor. Disordered stretches follow at residues 343-402, 427-451, 538-606, 641-669, 748-791, and 864-953; these read ASTY…PSVS, SPIP…RRAD, RFLP…NRMN, RKEP…NKDV, STSQ…RPIG, and RKSC…ESLE. 3 stretches are compositionally biased toward polar residues: residues 355 to 369, 378 to 402, and 433 to 444; these read RTPS…SRPA, TVQT…PSVS, and KSYSATIQTPRS. The segment covering 547–557 has biased composition (low complexity); that stretch reads PSEFSSSVGSK. The segment covering 558-575 has biased composition (polar residues); it reads QNLSMDIPSVQNVSTKQK. Residues 656–669 show a composition bias toward basic and acidic residues; it reads LKKDQSSEVANKDV. Residues 748-766 show a composition bias toward polar residues; that stretch reads STSQVSHTQRLQQSISTSL. Basic and acidic residues-rich tracts occupy residues 767 to 778, 865 to 884, and 937 to 953; these read ERVKSNTKKESN, KSCE…DLER, and PHIE…ESLE. Phosphoserine occurs at positions 872 and 875.

This sequence belongs to the protein kinase superfamily. Ser/Thr protein kinase family.

It localises to the cytoplasm. It carries out the reaction L-seryl-[protein] + ATP = O-phospho-L-seryl-[protein] + ADP + H(+). It catalyses the reaction L-threonyl-[protein] + ATP = O-phospho-L-threonyl-[protein] + ADP + H(+). The sequence is that of Serine/threonine-protein kinase ppk30 (ppk30) from Schizosaccharomyces pombe (strain 972 / ATCC 24843) (Fission yeast).